The sequence spans 31 residues: Acetyl-CoA carboxylase (31 aa).

The segment at 1-31 (RISSSVIAHKTQLDSGKREVYSSHMQLGGPK) is disordered. Basic and acidic residues predominate over residues 11-21 (TQLDSGKREVY).

The catalysed reaction is hydrogencarbonate + acetyl-CoA + ATP = malonyl-CoA + ADP + phosphate + H(+). Its pathway is lipid metabolism; malonyl-CoA biosynthesis; malonyl-CoA from acetyl-CoA: step 1/1. The sequence is that of Acetyl-CoA carboxylase from Catharanthus roseus (Madagascar periwinkle).